Consider the following 446-residue polypeptide: Nitrate/nitrite binding protein NrtA (446 aa).

A signal peptide spans 1 to 28 (MSNFSRSTRRKFMFTAGAAAIGGVVLHG). Residue Cys29 is the site of N-palmitoyl cysteine attachment. Cys29 is lipidated: S-diacylglycerol cysteine. Positions 102, 155, 196, 240, and 269 each coordinate nitrate.

Belongs to the CmpA/NrtA family. In terms of assembly, the complex is composed of two ATP-binding proteins (NrtC and NrtD), two transmembrane proteins (NrtB) and a solute-binding protein (NrtA).

The protein resides in the cell inner membrane. In terms of biological role, part of the ABC transporter complex NrtABCD involved in nitrate uptake. The complex is probably also involved in nitrite transport. NrtA is the substrate-binding protein. Binds nitrate. This Synechocystis sp. (strain ATCC 27184 / PCC 6803 / Kazusa) protein is Nitrate/nitrite binding protein NrtA.